The primary structure comprises 277 residues: Glucose-6-phosphatase catalytic subunit 1 (277 aa).

Arg4 serves as a coordination point for substrate. The next 2 helical transmembrane spans lie at 39-59 (GHAMGAAGVWYVMVTALLSIA) and 67-87 (LLYRFLYIGLWMLMGLVELVV). His40 functions as the Proton donor in the catalytic mechanism. Substrate is bound at residue Arg91. His97 serves as the catalytic Nucleophile. 3 helical membrane-spanning segments follow: residues 131-151 (FLITLFLTSFAVGFYVLLKAL), 215-235 (IGCIVISVSLLHLLDGWTFSP), and 250-270 (AVALLIPTTLVPWALSKIYPV). The Prevents secretion from ER motif lies at 274 to 277 (GKNL).

It belongs to the glucose-6-phosphatase family.

It is found in the endoplasmic reticulum membrane. The catalysed reaction is D-glucose 6-phosphate + H2O = D-glucose + phosphate. Its pathway is carbohydrate biosynthesis; gluconeogenesis. Its function is as follows. Hydrolyzes glucose-6-phosphate to glucose in the endoplasmic reticulum. Forms with the glucose-6-phosphate transporter (SLC37A4/G6PT) the complex responsible for glucose production in the terminal step of glycogenolysis and gluconeogenesis. Hence, it is the key enzyme in homeostatic regulation of blood glucose levels. The chain is Glucose-6-phosphatase catalytic subunit 1 (g6pc1) from Haplochromis xenognathus (Lake Victoria cichlid).